A 2789-amino-acid chain; its full sequence is Multiple epidermal growth factor-like domains protein 8 (2789 aa).

The signal sequence occupies residues 1–27 (MALGGALALALALALAVLGPLSLRVLA). The Extracellular portion of the chain corresponds to 28-2591 (GDCKGQRQVL…FFRQDQAHID (2564 aa)). Cystine bridges form between C30–C57, C142–C152, C146–C158, C174–C184, C178–C191, and C193–C202. Residues 30–140 (CKGQRQVLRE…LGFNASFRFS (111 aa)) enclose the CUB 1 domain. N50 is a glycosylation site (N-linked (GlcNAc...) asparagine). 2 EGF-like domains span residues 138 to 168 (RFSL…GGPD) and 170 to 203 (GLQE…RACD). Kelch repeat units follow at residues 241 to 287 (LLAV…AVAW), 290 to 338 (LLVL…AGHA), 346 to 399 (WLYV…FHAP), 402 to 453 (TLLV…FHTA), 459 to 511 (YMVV…APPS), and 525 to 575 (VLLV…SRDP). 3 consecutive PSI domains span residues 561–613 (YCSM…SDCQ), 847–899 (ACTS…ALCP), and 900–947 (LCEE…EECP). N-linked (GlcNAc...) asparagine glycosylation occurs at N1048. One can recognise an EGF-like 3; calcium-binding domain in the interval 1074-1115 (DVDECRLGLARCHPRATCLNTPLSYECHCQRGYQGDGITHCN). Intrachain disulfides connect C1078–C1091, C1085–C1100, C1102–C1114, C1163–C1171, C1165–C1179, C1182–C1191, C1194–C1208, C1211–C1224, C1213–C1231, C1233–C1242, C1245–C1259, C1263–C1302, C1336–C1367, C1407–C1421, C1415–C1433, and C1435–C1444. Laminin EGF-like domains lie at 1163–1210 (CGCS…GCRP) and 1211–1261 (CQCN…SCFR). The N-linked (GlcNAc...) asparagine glycan is linked to N1226. The region spanning 1263-1405 (CGGRALLTNV…WGFNASVGSA (143 aa)) is the CUB 2 domain. A glycan (N-linked (GlcNAc...) asparagine) is linked at N1271. T1353 bears the Phosphothreonine mark. Residues 1403-1445 (GSARCGSGGPGSCPVPQECVPQDGAAGAGLCRCPQGWAGPHCR) form the EGF-like 4 domain. Kelch repeat units follow at residues 1522 to 1570 (TLWM…SFHA), 1580 to 1629 (AMYL…TARR), 1632 to 1679 (SLLL…SAVY), 1685 to 1735 (SLYV…HASA), 1740 to 1787 (TMVV…ESVA), and 1796 to 1841 (RLYI…WCHG). 4 PSI domains span residues 1820–1860 (PCRL…PPCS), 1868–1923 (ECRR…NDCR), 2004–2062 (PCHL…ESCS), and 2064–2121 (GCAQ…LSCP). Residue N2010 is glycosylated (N-linked (GlcNAc...) asparagine). One can recognise an EGF-like 5 domain in the interval 2122-2160 (PEDECANGHHDCNETQNCHDQPHGYECSCKTGYTMDNVT). 2 disulfide bridges follow: C2126–C2139 and C2133–C2148. N-linked (GlcNAc...) asparagine glycans are attached at residues N2158 and N2173. 8 disulfides stabilise this stretch: C2197–C2205, C2199–C2214, C2217–C2226, C2229–C2243, C2324–C2333, C2326–C2341, C2343–C2368, and C2371–C2385. Laminin EGF-like domains are found at residues 2197–2245 (CRCN…TCRP) and 2324–2387 (CQCN…QCYR). Positions 2468-2508 (VHIQPPPPPPPPPPPADGVPRVAADLGGLGTGSGSGSPVEP) are disordered. Residues 2471–2484 (QPPPPPPPPPPPAD) show a composition bias toward pro residues. The helical transmembrane segment at 2592-2612 (LFVFFSVFFSCFFLFLSLCVL) threads the bilayer. Residues 2613–2789 (LWKAKQALDQ…SQDNLTSMSL (177 aa)) lie on the Cytoplasmic side of the membrane. Gly residues predominate over residues 2762-2776 (GGAGGSGHGGGGGRK). Residues 2762 to 2789 (GGAGGSGHGGGGGRKGLLSQDNLTSMSL) are disordered. A compositionally biased stretch (polar residues) spans 2780 to 2789 (SQDNLTSMSL).

Highest expression in brain, testis and kidney.

It localises to the membrane. Acts as a negative regulator of hedgehog signaling. In Mus musculus (Mouse), this protein is Multiple epidermal growth factor-like domains protein 8 (Megf8).